The sequence spans 186 residues: ATP synthase subunit delta (186 aa).

The protein belongs to the ATPase delta chain family. F-type ATPases have 2 components, F(1) - the catalytic core - and F(0) - the membrane proton channel. F(1) has five subunits: alpha(3), beta(3), gamma(1), delta(1), epsilon(1). CF(0) has four main subunits: a(1), b(1), b'(1) and c(10-14). The alpha and beta chains form an alternating ring which encloses part of the gamma chain. F(1) is attached to F(0) by a central stalk formed by the gamma and epsilon chains, while a peripheral stalk is formed by the delta, b and b' chains.

The protein resides in the cell inner membrane. F(1)F(0) ATP synthase produces ATP from ADP in the presence of a proton or sodium gradient. F-type ATPases consist of two structural domains, F(1) containing the extramembraneous catalytic core and F(0) containing the membrane proton channel, linked together by a central stalk and a peripheral stalk. During catalysis, ATP synthesis in the catalytic domain of F(1) is coupled via a rotary mechanism of the central stalk subunits to proton translocation. Functionally, this protein is part of the stalk that links CF(0) to CF(1). It either transmits conformational changes from CF(0) to CF(1) or is implicated in proton conduction. The sequence is that of ATP synthase subunit delta from Roseobacter denitrificans (strain ATCC 33942 / OCh 114) (Erythrobacter sp. (strain OCh 114)).